Reading from the N-terminus, the 459-residue chain is Putrescine aminotransferase (459 aa).

Pyridoxal 5'-phosphate-binding positions include 150 to 151 (GT) and Gln274. Lys300 carries the N6-(pyridoxal phosphate)lysine modification. Thr332 provides a ligand contact to pyridoxal 5'-phosphate.

The protein belongs to the class-III pyridoxal-phosphate-dependent aminotransferase family. Putrescine aminotransferase subfamily. The cofactor is pyridoxal 5'-phosphate.

The enzyme catalyses an alkane-alpha,omega-diamine + 2-oxoglutarate = an omega-aminoaldehyde + L-glutamate. It carries out the reaction putrescine + 2-oxoglutarate = 1-pyrroline + L-glutamate + H2O. It catalyses the reaction cadaverine + 2-oxoglutarate = 5-aminopentanal + L-glutamate. Its pathway is amine and polyamine degradation; putrescine degradation; 4-aminobutanal from putrescine (transaminase route): step 1/1. Catalyzes the aminotransferase reaction from putrescine to 2-oxoglutarate, leading to glutamate and 4-aminobutanal, which spontaneously cyclizes to form 1-pyrroline. This is the first step in one of two pathways for putrescine degradation, where putrescine is converted into 4-aminobutanoate (gamma-aminobutyrate or GABA) via 4-aminobutanal. Also functions as a cadaverine transaminase in a a L-lysine degradation pathway to succinate that proceeds via cadaverine, glutarate and L-2-hydroxyglutarate. The polypeptide is Putrescine aminotransferase (Klebsiella pneumoniae (strain 342)).